The primary structure comprises 280 residues: uncharacterized protein (280 aa).

The signal sequence occupies residues 1–35; it reads MQGQVLKKVLKKYVHIGMCTLFLHAILLFPCVAQA.

This is an uncharacterized protein from Treponema pallidum (strain Nichols).